A 180-amino-acid chain; its full sequence is Epididymal-specific lipocalin-6 (180 aa).

An N-terminal signal peptide occupies residues 1-20 (MGGLLLAALLALVAVPRAQA). A disulfide bond links C81 and C174.

Belongs to the calycin superfamily. Lipocalin family.

It localises to the secreted. Its function is as follows. May play a role in male fertility. This Macaca mulatta (Rhesus macaque) protein is Epididymal-specific lipocalin-6 (LCN6).